The following is a 270-amino-acid chain: uncharacterized protein (270 aa).

Residues 1 to 22 form the signal peptide; it reads MEYIKKIALYMSVLLLIIFIGG. Cysteine 23 is lipidated: N-palmitoyl cysteine. The S-diacylglycerol cysteine moiety is linked to residue cysteine 23.

It belongs to the staphylococcal tandem lipoprotein family.

It is found in the cell membrane. This is an uncharacterized protein from Staphylococcus aureus (strain N315).